The chain runs to 92 residues: Small ribosomal subunit protein uS19 (92 aa).

Belongs to the universal ribosomal protein uS19 family.

Functionally, protein S19 forms a complex with S13 that binds strongly to the 16S ribosomal RNA. This is Small ribosomal subunit protein uS19 from Rickettsia bellii (strain OSU 85-389).